Here is a 473-residue protein sequence, read N- to C-terminus: Ribosomal RNA small subunit methyltransferase F (473 aa).

Residues alanine 123–lysine 129, glutamate 147, aspartate 174, and aspartate 192 each bind S-adenosyl-L-methionine. The Nucleophile role is filled by cysteine 245.

It belongs to the class I-like SAM-binding methyltransferase superfamily. RsmB/NOP family.

The protein localises to the cytoplasm. The enzyme catalyses cytidine(1407) in 16S rRNA + S-adenosyl-L-methionine = 5-methylcytidine(1407) in 16S rRNA + S-adenosyl-L-homocysteine + H(+). Functionally, specifically methylates the cytosine at position 1407 (m5C1407) of 16S rRNA. The polypeptide is Ribosomal RNA small subunit methyltransferase F (Vibrio atlanticus (strain LGP32) (Vibrio splendidus (strain Mel32))).